We begin with the raw amino-acid sequence, 187 residues long: Elongation factor P (187 aa).

The protein belongs to the elongation factor P family.

The protein resides in the cytoplasm. It functions in the pathway protein biosynthesis; polypeptide chain elongation. Involved in peptide bond synthesis. Stimulates efficient translation and peptide-bond synthesis on native or reconstituted 70S ribosomes in vitro. Probably functions indirectly by altering the affinity of the ribosome for aminoacyl-tRNA, thus increasing their reactivity as acceptors for peptidyl transferase. This is Elongation factor P from Mycobacterium marinum (strain ATCC BAA-535 / M).